A 274-amino-acid polypeptide reads, in one-letter code: NAD kinase (274 aa).

Asp-60 serves as the catalytic Proton acceptor. Residues 60–61 (DG), Lys-65, 127–128 (NE), and Arg-152 each bind NAD(+).

The protein belongs to the NAD kinase family. Requires a divalent metal cation as cofactor.

The protein resides in the cytoplasm. It catalyses the reaction NAD(+) + ATP = ADP + NADP(+) + H(+). Functionally, involved in the regulation of the intracellular balance of NAD and NADP, and is a key enzyme in the biosynthesis of NADP. Catalyzes specifically the phosphorylation on 2'-hydroxyl of the adenosine moiety of NAD to yield NADP. This is NAD kinase from Mycoplasmoides gallisepticum (strain R(low / passage 15 / clone 2)) (Mycoplasma gallisepticum).